Reading from the N-terminus, the 305-residue chain is ATP synthase gamma chain (305 aa).

The protein belongs to the ATPase gamma chain family. In terms of assembly, F-type ATPases have 2 components, CF(1) - the catalytic core - and CF(0) - the membrane proton channel. CF(1) has five subunits: alpha(3), beta(3), gamma(1), delta(1), epsilon(1). CF(0) has three main subunits: a, b and c.

The protein resides in the cell membrane. Its function is as follows. Produces ATP from ADP in the presence of a proton gradient across the membrane. The gamma chain is believed to be important in regulating ATPase activity and the flow of protons through the CF(0) complex. The polypeptide is ATP synthase gamma chain (Mycobacterium tuberculosis (strain ATCC 25177 / H37Ra)).